Reading from the N-terminus, the 308-residue chain is GATA transcription factor 10 (308 aa).

Residues 214 to 268 (DGIVRICTHCETITTPQWRQGPSGPKTLCNACGVRFKSGRLVPEYRPASSPTFIP) form a GATA-type zinc finger.

It belongs to the type IV zinc-finger family. Class A subfamily.

The protein resides in the nucleus. Transcriptional activator that specifically binds 5'-GATA-3' or 5'-GAT-3' motifs within gene promoters. May be involved in the regulation of some light-responsive genes. This chain is GATA transcription factor 10 (GATA10), found in Arabidopsis thaliana (Mouse-ear cress).